The sequence spans 37 residues: Cytochrome b6-f complex subunit 5 (37 aa).

The helical transmembrane segment at 5 to 25 threads the bilayer; that stretch reads LLSGVVLGLILVTLSGLFFAA.

The protein belongs to the PetG family. The 4 large subunits of the cytochrome b6-f complex are cytochrome b6, subunit IV (17 kDa polypeptide, PetD), cytochrome f and the Rieske protein, while the 4 small subunits are PetG, PetL, PetM and PetN. The complex functions as a dimer.

It is found in the cellular thylakoid membrane. Component of the cytochrome b6-f complex, which mediates electron transfer between photosystem II (PSII) and photosystem I (PSI), cyclic electron flow around PSI, and state transitions. PetG is required for either the stability or assembly of the cytochrome b6-f complex. This is Cytochrome b6-f complex subunit 5 from Trichodesmium erythraeum (strain IMS101).